The primary structure comprises 732 residues: Polyadenylate-binding protein, cytoplasmic and nuclear (732 aa).

The segment covering 1 to 19 has biased composition (polar residues); the sequence is MSAETSTTPAPAENTNGTP. A disordered region spans residues 1 to 26; that stretch reads MSAETSTTPAPAENTNGTPDNAPAPE. 4 RRM domains span residues 42 to 120, 130 to 207, 223 to 300, and 326 to 454; these read ASLY…WSQR, GNVF…HHIS, TNIY…RAQK, and VNLY…LAQR. 2 disordered regions span residues 357-413 and 706-732; these read VMRD…KKPL and MKNK…ENKA. Basic and acidic residues predominate over residues 371–412; the sequence is SETKESANKENEKAAEGEKEPAAEEKEKEEKKEAEQKPEKKP. Residues 630–707 enclose the PABC domain; sequence VGVLTAQALS…ALSVYDEYMK (78 aa).

Belongs to the polyadenylate-binding protein type-1 family.

The protein resides in the cytoplasm. Its subcellular location is the nucleus. Its function is as follows. Binds the poly(A) tail of mRNA. Appears to be an important mediator of the multiple roles of the poly(A) tail in mRNA biogenesis, stability and translation. In the nucleus, involved in both mRNA cleavage and polyadenylation. Is also required for efficient mRNA export to the cytoplasm. Acts in concert with a poly(A)-specific nuclease (PAN) to affect poly(A) tail shortening, which may occur concomitantly with either nucleocytoplasmic mRNA transport or translational initiation. In the cytoplasm, stimulates translation initiation and regulates mRNA decay through translation termination-coupled poly(A) shortening, probably mediated by PAN. The protein is Polyadenylate-binding protein, cytoplasmic and nuclear (pab1) of Emericella nidulans (strain FGSC A4 / ATCC 38163 / CBS 112.46 / NRRL 194 / M139) (Aspergillus nidulans).